The following is a 126-amino-acid chain: uncharacterized protein (126 aa).

The tract at residues 1 to 27 (MSKSKTPNFDDMEVLDDTNDEYDDSES) is disordered. The span at 10-27 (DDMEVLDDTNDEYDDSES) shows a compositional bias: acidic residues.

This is an uncharacterized protein from Halorubrum sp. PV6 (HRPV-1).